The following is a 283-amino-acid chain: Thymidylate synthase (283 aa).

R22 serves as a coordination point for dUMP. Residue C160 is the Nucleophile of the active site. DUMP-binding positions include 180 to 183, N191, and 221 to 223; these read RSCD and HIY. D183 is a (6R)-5,10-methylene-5,6,7,8-tetrahydrofolate binding site. S282 is a (6R)-5,10-methylene-5,6,7,8-tetrahydrofolate binding site.

It belongs to the thymidylate synthase family. Bacterial-type ThyA subfamily. In terms of assembly, homodimer.

It is found in the cytoplasm. The catalysed reaction is dUMP + (6R)-5,10-methylene-5,6,7,8-tetrahydrofolate = 7,8-dihydrofolate + dTMP. It functions in the pathway pyrimidine metabolism; dTTP biosynthesis. In terms of biological role, catalyzes the reductive methylation of 2'-deoxyuridine-5'-monophosphate (dUMP) to 2'-deoxythymidine-5'-monophosphate (dTMP) while utilizing 5,10-methylenetetrahydrofolate (mTHF) as the methyl donor and reductant in the reaction, yielding dihydrofolate (DHF) as a by-product. This enzymatic reaction provides an intracellular de novo source of dTMP, an essential precursor for DNA biosynthesis. The sequence is that of Thymidylate synthase from Marinomonas sp. (strain MWYL1).